The following is a 276-amino-acid chain: Protein canopy homolog 3 (276 aa).

Residues 1-16 form the signal peptide; sequence MNVFISVVLFLGSARA. The Saposin B-type domain occupies 30 to 269; it reads NKCEVCKFVS…EEEIQKKVPL (240 aa). 3 disulfide bridges follow: cysteine 32–cysteine 190, cysteine 35–cysteine 178, and cysteine 88–cysteine 150. The stretch at 137 to 162 forms a coiled coil; sequence NETSAEVADLKKQCDVMVEQYEDVIE. The disordered stretch occupies residues 206–276; that stretch reads AEDKKKKKGK…VPLNQPKTEL (71 aa). Basic residues-rich tracts occupy residues 210–219 and 228–239; these read KKKKGKKKKG and KEKKVKKKKKKS. The segment covering 240-252 has biased composition (basic and acidic residues); the sequence is KISDSESSKRRME.

It belongs to the canopy family.

It is found in the endoplasmic reticulum. Its function is as follows. Toll-like receptor (TLR)-specific co-chaperone for HSP90B1. Required for proper TLR folding and hence controls TLR exit from the endoplasmic reticulum. Consequently, required for immune responses. In Danio rerio (Zebrafish), this protein is Protein canopy homolog 3 (cnpy3).